Here is a 208-residue protein sequence, read N- to C-terminus: MATVLFVKANNRPAEQAVSVKLYEAFLANYKEAHPNDTVVELDLYKEELPYVGVDMINGTFKAGKGFDLTEEEAKAVAVADKYLNQFLEADKVVFGFPLWNLTIPAVLHTYIDYLNRAGKTFKYTPEGPVGLIGDKKIALLNARGGVYSEGPAAEVEMAVKYVASMMGFFGATNMETVVIEGHNQFPDKAEEIIAAGLEEAAKVASKF.

The protein belongs to the azoreductase type 1 family. Homodimer. FMN serves as cofactor.

The enzyme catalyses 2 a quinone + NADH + H(+) = 2 a 1,4-benzosemiquinone + NAD(+). The catalysed reaction is N,N-dimethyl-1,4-phenylenediamine + anthranilate + 2 NAD(+) = 2-(4-dimethylaminophenyl)diazenylbenzoate + 2 NADH + 2 H(+). Functionally, quinone reductase that provides resistance to thiol-specific stress caused by electrophilic quinones. Its function is as follows. Also exhibits azoreductase activity. Catalyzes the reductive cleavage of the azo bond in aromatic azo compounds to the corresponding amines. This Bacillus cereus (strain ATCC 10987 / NRS 248) protein is FMN-dependent NADH:quinone oxidoreductase 4.